The chain runs to 127 residues: Large ribosomal subunit protein bL19 (127 aa).

Belongs to the bacterial ribosomal protein bL19 family.

This protein is located at the 30S-50S ribosomal subunit interface and may play a role in the structure and function of the aminoacyl-tRNA binding site. The protein is Large ribosomal subunit protein bL19 of Trichodesmium erythraeum (strain IMS101).